A 569-amino-acid polypeptide reads, in one-letter code: Urease subunit alpha (569 aa).

The Urease domain maps to 132-569 (GGIDSHIHFI…LPLAQRYFLF (438 aa)). 3 residues coordinate Ni(2+): His137, His139, and Lys220. At Lys220 the chain carries N6-carboxylysine. His222 is a substrate binding site. Positions 249 and 275 each coordinate Ni(2+). Residue His323 is the Proton donor of the active site. Asp363 lines the Ni(2+) pocket.

This sequence belongs to the metallo-dependent hydrolases superfamily. Urease alpha subunit family. As to quaternary structure, heterotrimer of UreA (gamma), UreB (beta) and UreC (alpha) subunits. Three heterotrimers associate to form the active enzyme. The cofactor is Ni cation. Carboxylation allows a single lysine to coordinate two nickel ions.

It localises to the cytoplasm. It carries out the reaction urea + 2 H2O + H(+) = hydrogencarbonate + 2 NH4(+). It participates in nitrogen metabolism; urea degradation; CO(2) and NH(3) from urea (urease route): step 1/1. This is Urease subunit alpha from Dechloromonas aromatica (strain RCB).